Here is a 149-residue protein sequence, read N- to C-terminus: uncharacterized protein (149 aa).

The chain crosses the membrane as a helical span at residues 12–31 (FKNLVIGAVSGVAAAYFLST).

Its subcellular location is the membrane. This is an uncharacterized protein from Streptococcus pyogenes serotype M6 (strain ATCC BAA-946 / MGAS10394).